A 524-amino-acid chain; its full sequence is Glutamyl-tRNA(Gln) amidotransferase subunit A (524 aa).

Catalysis depends on charge relay system residues Lys109 and Ser184. Ser208 acts as the Acyl-ester intermediate in catalysis.

It belongs to the amidase family. GatA subfamily. As to quaternary structure, heterotrimer of A, B and C subunits.

The catalysed reaction is L-glutamyl-tRNA(Gln) + L-glutamine + ATP + H2O = L-glutaminyl-tRNA(Gln) + L-glutamate + ADP + phosphate + H(+). Functionally, allows the formation of correctly charged Gln-tRNA(Gln) through the transamidation of misacylated Glu-tRNA(Gln) in organisms which lack glutaminyl-tRNA synthetase. The reaction takes place in the presence of glutamine and ATP through an activated gamma-phospho-Glu-tRNA(Gln). This Tropheryma whipplei (strain TW08/27) (Whipple's bacillus) protein is Glutamyl-tRNA(Gln) amidotransferase subunit A.